The sequence spans 128 residues: Histone H2A (128 aa).

This sequence belongs to the histone H2A family. In terms of assembly, the nucleosome is a histone octamer containing two molecules each of H2A, H2B, H3 and H4 assembled in one H3-H4 heterotetramer and two H2A-H2B heterodimers. The octamer wraps approximately 147 bp of DNA.

The protein localises to the nucleus. It is found in the chromosome. Its function is as follows. Core component of nucleosome. Nucleosomes wrap and compact DNA into chromatin, limiting DNA accessibility to the cellular machineries which require DNA as a template. Histones thereby play a central role in transcription regulation, DNA repair, DNA replication and chromosomal stability. DNA accessibility is regulated via a complex set of post-translational modifications of histones, also called histone code, and nucleosome remodeling. The sequence is that of Histone H2A (HTA1) from Encephalitozoon cuniculi (strain GB-M1) (Microsporidian parasite).